Reading from the N-terminus, the 306-residue chain is Glutamyl-Q tRNA(Asp) synthetase (306 aa).

Residues 4-8 (RYAPS) and Glu-40 contribute to the L-glutamate site. The short motif at 7–17 (PSPSGDLHFGN) is the 'HIGH' region element. 4 residues coordinate Zn(2+): Cys-92, Cys-94, Tyr-113, and Cys-117. L-glutamate contacts are provided by Tyr-180 and Arg-198. Residues 236–240 (RLAKR) carry the 'KMSKS' region motif. Lys-239 lines the ATP pocket.

It belongs to the class-I aminoacyl-tRNA synthetase family. GluQ subfamily. Requires Zn(2+) as cofactor.

In terms of biological role, catalyzes the tRNA-independent activation of glutamate in presence of ATP and the subsequent transfer of glutamate onto a tRNA(Asp). Glutamate is transferred on the 2-amino-5-(4,5-dihydroxy-2-cyclopenten-1-yl) moiety of the queuosine in the wobble position of the QUC anticodon. This Corynebacterium efficiens (strain DSM 44549 / YS-314 / AJ 12310 / JCM 11189 / NBRC 100395) protein is Glutamyl-Q tRNA(Asp) synthetase.